Here is a 172-residue protein sequence, read N- to C-terminus: Large ribosomal subunit protein uL10 (172 aa).

It belongs to the universal ribosomal protein uL10 family. As to quaternary structure, part of the ribosomal stalk of the 50S ribosomal subunit. The N-terminus interacts with L11 and the large rRNA to form the base of the stalk. The C-terminus forms an elongated spine to which L12 dimers bind in a sequential fashion forming a multimeric L10(L12)X complex.

In terms of biological role, forms part of the ribosomal stalk, playing a central role in the interaction of the ribosome with GTP-bound translation factors. The chain is Large ribosomal subunit protein uL10 from Pelodictyon phaeoclathratiforme (strain DSM 5477 / BU-1).